The sequence spans 306 residues: Non-specific ribonucleoside hydrolase RihC (306 aa).

His235 is an active-site residue.

This sequence belongs to the IUNH family. RihC subfamily.

Its function is as follows. Hydrolyzes both purine and pyrimidine ribonucleosides with a broad-substrate specificity. The chain is Non-specific ribonucleoside hydrolase RihC from Salmonella dublin (strain CT_02021853).